We begin with the raw amino-acid sequence, 146 residues long: Hemoglobin subunit beta (146 aa).

V1 bears the N-acetylvaline mark. One can recognise a Globin domain in the interval 2 to 146; the sequence is QLSGEEKAAV…VANALAHKYH (145 aa). Residue S44 is modified to Phosphoserine. K59 is modified (N6-acetyllysine). H63 provides a ligand contact to heme b. Position 82 is an N6-acetyllysine (K82). H92 is a heme b binding site. C93 carries the post-translational modification S-nitrosocysteine. At K144 the chain carries N6-acetyllysine.

Belongs to the globin family. Heterotetramer of two alpha chains and two beta chains. Red blood cells.

In terms of biological role, involved in oxygen transport from the lung to the various peripheral tissues. This is Hemoglobin subunit beta (HBB) from Equus hemionus kulan (Turkmenian kulan).